We begin with the raw amino-acid sequence, 374 residues long: Chaperone protein DnaJ (374 aa).

In terms of domain architecture, J spans 5–70 (DFYEILGVGK…QKRDAYDRYG (66 aa)). The tract at residues 29 to 50 (AMKHHPDRNPDSKGAEDKFKEA) is disordered. The span at 35–50 (DRNPDSKGAEDKFKEA) shows a compositional bias: basic and acidic residues. A CR-type zinc finger spans residues 134-212 (GYDTTIRVPS…CSGAGKIKRN (79 aa)). The Zn(2+) site is built by Cys147, Cys150, Cys164, Cys167, Cys186, Cys189, Cys200, and Cys203. CXXCXGXG motif repeat units follow at residues 147–154 (CETCDGSG), 164–171 (CTTCGGHG), 186–193 (CPKCHGSG), and 200–207 (CGTCSGAG).

The protein belongs to the DnaJ family. In terms of assembly, homodimer. Requires Zn(2+) as cofactor.

It is found in the cytoplasm. In terms of biological role, participates actively in the response to hyperosmotic and heat shock by preventing the aggregation of stress-denatured proteins and by disaggregating proteins, also in an autonomous, DnaK-independent fashion. Unfolded proteins bind initially to DnaJ; upon interaction with the DnaJ-bound protein, DnaK hydrolyzes its bound ATP, resulting in the formation of a stable complex. GrpE releases ADP from DnaK; ATP binding to DnaK triggers the release of the substrate protein, thus completing the reaction cycle. Several rounds of ATP-dependent interactions between DnaJ, DnaK and GrpE are required for fully efficient folding. Also involved, together with DnaK and GrpE, in the DNA replication of plasmids through activation of initiation proteins. This is Chaperone protein DnaJ from Janthinobacterium sp. (strain Marseille) (Minibacterium massiliensis).